Reading from the N-terminus, the 226-residue chain is E3 ubiquitin-protein ligase RNF186 (226 aa).

An RING-type zinc finger spans residues 39–85 (CLVCREPYSGVRPPKLLGCQHAFCAVCLKLLLCVQDDAWSIPCPLCR). The segment at 121-143 (GLANPATLTAGQPREAGEEEQDA) is disordered. Helical transmembrane passes span 157-177 (HLLLLVLLIILILPFIYPGVI) and 179-199 (WVLSFLETLALLLALLFCSHP).

In terms of assembly, interacts with BNIP1. Post-translationally, polyubiquitinated. 'Lys-29' autoubiquitination leads to proteasomal degradation.

Its subcellular location is the endoplasmic reticulum membrane. The catalysed reaction is S-ubiquitinyl-[E2 ubiquitin-conjugating enzyme]-L-cysteine + [acceptor protein]-L-lysine = [E2 ubiquitin-conjugating enzyme]-L-cysteine + N(6)-ubiquitinyl-[acceptor protein]-L-lysine.. Its pathway is protein modification; protein ubiquitination. Functionally, E3 ubiquitin protein ligase that is part of an apoptotic signaling pathway activated by endoplasmic reticulum stress. Stimulates the expression of proteins specific of the unfolded protein response (UPR), ubiquitinates BNIP1 and regulates its localization to the mitochondrion and induces calcium release from the endoplasmic reticulum that ultimately leads to cell apoptosis. Plays a role in the maintenance of intestinal homeostasis and clearance of enteric pathogens. Upon NOD2 stimulation, ubiquitinates the ER stress sensor activating transcription factor 6/ATF6 and promotes the unfolded protein response UPR. Participates in basal level of autophagy maintenance by regulating the ubiquitination of EPHB2. Upon stimulation by ligand EFNB1, ubiquitinates EPHB2 and further recruits MAP1LC3B for autophagy induction. Controls nutrient sensing by ubiquitinating Sestrin-2/SESN2, which is an intracellular sensor of cytosolic leucine and inhibitor of mTORC1 activity. The polypeptide is E3 ubiquitin-protein ligase RNF186 (Bos taurus (Bovine)).